We begin with the raw amino-acid sequence, 255 residues long: HTH-type transcriptional regulator SkgA (255 aa).

Residues 3-72 form the HTH merR-type domain; it reads VYTVKQMARL…LKDIQAALDQ (70 aa). The segment at residues 6–25 is a DNA-binding region (H-T-H motif); the sequence is VKQMARLSGVSVRALHHYDA.

Its function is as follows. Regulates the induction of katG (catalase-peroxidase) in stationary phase. This is HTH-type transcriptional regulator SkgA (skgA) from Caulobacter vibrioides (strain ATCC 19089 / CIP 103742 / CB 15) (Caulobacter crescentus).